Consider the following 837-residue polypeptide: Telomere length regulation protein TEL2 homolog (837 aa).

Position 1 is an N-acetylmethionine (Met1). Residues Pro374, Pro419, and Pro422 each carry the hydroxyproline modification. Residues 444 to 472 (QPAGDGASEAGTSLVPATAEPPAETPAEI) form a disordered region. At Ser456 the chain carries Phosphoserine. Residues 459 to 471 (PATAEPPAETPAE) show a composition bias toward low complexity. At Ser485 the chain carries Phosphoserine; by CK2. A phosphoserine mark is found at Ser487 and Ser491. Residues 627–651 (GCLGRTPQPGSPSPNTPCLPEAAVS) are disordered. Residues Ser688 and Ser836 each carry the phosphoserine modification.

The protein belongs to the TEL2 family. As to quaternary structure, component of the TTT complex composed of TELO2, TTI1 and TTI2. Interacts with ATM, ATR, MTOR, PRKDC, RUVBL2, TTI1, TTI2, SMG1 and TRRAP. Component of the mTORC1 and mTORC2 complexes. Interacts (phosphorylated form) with PIH1D1 which mediates interaction of TELO2 with the R2TP complex composed of RUVBL1, RUVBL2, PIH1D1, and RPAP3. Post-translationally, hydroxylation by PHD3 is required for a proper interaction with ATR, and activation of the ATR/CHK1/p53 pathway following DNA damage. In terms of processing, phosphorylated at Ser-485 by CK2 following growth factor deprivation, leading to its subsequent ubiquitination by the SCF(FBXO9) complex. Phosphorylation by CK2 only takes place when TELO2 is bound to mTORC1, not mTORC2; leading to selective ubiquitination of mTORC1-associated protein. Ubiquitinated by the SCF(FBXO9) complex following phosphorylation by CK2 in response to growth factor deprivation, leading to its degradation by the proteasome. Only mTORC1-associated protein is ubiquitinated and degraded, leading to selective inactivation of mTORC1 to restrain cell growth and protein translation, while mTORC2 is activated due to the relief of feedback inhibition by mTORC1.

The protein resides in the cytoplasm. Its subcellular location is the membrane. It localises to the nucleus. The protein localises to the chromosome. It is found in the telomere. Its function is as follows. Regulator of the DNA damage response (DDR). Part of the TTT complex that is required to stabilize protein levels of the phosphatidylinositol 3-kinase-related protein kinase (PIKK) family proteins. The TTT complex is involved in the cellular resistance to DNA damage stresses, like ionizing radiation (IR), ultraviolet (UV) and mitomycin C (MMC). Together with the TTT complex and HSP90 may participate in the proper folding of newly synthesized PIKKs. Promotes assembly, stabilizes and maintains the activity of mTORC1 and mTORC2 complexes, which regulate cell growth and survival in response to nutrient and hormonal signals. May be involved in telomere length regulation. This Homo sapiens (Human) protein is Telomere length regulation protein TEL2 homolog (TELO2).